A 517-amino-acid polypeptide reads, in one-letter code: Amidophosphoribosyltransferase (517 aa).

Methionine 1 bears the N-acetylmethionine mark. A propeptide spanning residues 1-11 is cleaved from the precursor; the sequence is MELEELGIREE. Cysteine 12 (nucleophile) is an active-site residue. In terms of domain architecture, Glutamine amidotransferase type-2 spans 12 to 261; it reads CGVFGCIASG…PGEIVEISRH (250 aa). Cysteine 280 provides a ligand contact to [4Fe-4S] cluster. Residues serine 327, aspartate 389, and aspartate 390 each coordinate Mg(2+). The [4Fe-4S] cluster site is built by cysteine 426, cysteine 503, and cysteine 506.

The protein in the C-terminal section; belongs to the purine/pyrimidine phosphoribosyltransferase family. Homotetramer. Mg(2+) serves as cofactor. [4Fe-4S] cluster is required as a cofactor.

The catalysed reaction is 5-phospho-beta-D-ribosylamine + L-glutamate + diphosphate = 5-phospho-alpha-D-ribose 1-diphosphate + L-glutamine + H2O. Its pathway is purine metabolism; IMP biosynthesis via de novo pathway; N(1)-(5-phospho-D-ribosyl)glycinamide from 5-phospho-alpha-D-ribose 1-diphosphate: step 1/2. Its function is as follows. Catalyzes the formation of phosphoribosylamine from phosphoribosylpyrophosphate (PRPP) and glutamine. This is Amidophosphoribosyltransferase from Mus musculus (Mouse).